Reading from the N-terminus, the 580-residue chain is uncharacterized protein (580 aa).

The region spanning 300-525 (PGYTATFLET…LRVLVELGYD (226 aa)) is the PE-PPE domain.

Belongs to the mycobacterial PPE family.

This is an uncharacterized protein from Mycobacterium tuberculosis (strain CDC 1551 / Oshkosh).